We begin with the raw amino-acid sequence, 1059 residues long: Isoleucine--tRNA ligase (1059 aa).

A 'HIGH' region motif is present at residues 47–57 (PYTTGHIHLGT). Residues 591 to 595 (KMSKS) carry the 'KMSKS' region motif. ATP is bound at residue Lys-594.

The protein belongs to the class-I aminoacyl-tRNA synthetase family. IleS type 2 subfamily. In terms of assembly, monomer. It depends on Zn(2+) as a cofactor.

The protein localises to the cytoplasm. The enzyme catalyses tRNA(Ile) + L-isoleucine + ATP = L-isoleucyl-tRNA(Ile) + AMP + diphosphate. Its function is as follows. Catalyzes the attachment of isoleucine to tRNA(Ile). As IleRS can inadvertently accommodate and process structurally similar amino acids such as valine, to avoid such errors it has two additional distinct tRNA(Ile)-dependent editing activities. One activity is designated as 'pretransfer' editing and involves the hydrolysis of activated Val-AMP. The other activity is designated 'posttransfer' editing and involves deacylation of mischarged Val-tRNA(Ile). The sequence is that of Isoleucine--tRNA ligase from Methanoculleus marisnigri (strain ATCC 35101 / DSM 1498 / JR1).